The chain runs to 1381 residues: Hepatocyte growth factor receptor (1381 aa).

An N-terminal signal peptide occupies residues 1–24 (MKAPAVLAPGILVLLFTLVQKSKG). The Extracellular portion of the chain corresponds to 25–932 (ECKEALVKST…VIVQPDQNFT (908 aa)). A Sema domain is found at 27–515 (KEALVKSTMN…TGKKITKIPL (489 aa)). A glycan (N-linked (GlcNAc...) asparagine) is linked at asparagine 45. Disulfide bonds link cysteine 95–cysteine 101, cysteine 98–cysteine 160, cysteine 133–cysteine 141, and cysteine 173–cysteine 176. A glycan (N-linked (GlcNAc...) asparagine) is linked at asparagine 106. N-linked (GlcNAc...) asparagine glycans are attached at residues asparagine 203 and asparagine 359. 2 cysteine pairs are disulfide-bonded: cysteine 299–cysteine 364 and cysteine 386–cysteine 398. 2 N-linked (GlcNAc...) asparagine glycosylation sites follow: asparagine 400 and asparagine 406. 4 disulfides stabilise this stretch: cysteine 520–cysteine 538, cysteine 526–cysteine 561, cysteine 529–cysteine 545, and cysteine 541–cysteine 551. 3 IPT/TIG domains span residues 563-655 (PTVY…FSYV), 657-739 (PVIT…FTYR), and 742-836 (PIVY…LIYV). Threonine 582 is a glycosylation site (O-linked (Man) threonine). Residues asparagine 607 and asparagine 635 are each glycosylated (N-linked (GlcNAc...) asparagine). O-linked (Man) threonine glycans are attached at residues threonine 676 and threonine 761. 3 N-linked (GlcNAc...) asparagine glycosylation sites follow: asparagine 785, asparagine 879, and asparagine 930. Residues 933 to 955 (GLIVGVVSISIILLLLLGLFLWL) form a helical membrane-spanning segment. At 956 to 1381 (KKRKQIKDLG…QDNVDGEGDT (426 aa)) the chain is on the cytoplasmic side. Serine 966 bears the Phosphoserine mark. The residue at position 977 (threonine 977) is a Phosphothreonine. 2 positions are modified to phosphoserine: serine 990 and serine 997. Position 1003 is a phosphotyrosine (tyrosine 1003). The region spanning 1078-1345 (VHFNEVIGRG…RISAIFSTFI (268 aa)) is the Protein kinase domain. Residues 1084 to 1092 (IGRGHFGCV) and lysine 1110 contribute to the ATP site. Aspartate 1204 (proton acceptor) is an active-site residue. Residues 1212–1381 (LDEKFTVKVA…QDNVDGEGDT (170 aa)) are interaction with RANBP9. At tyrosine 1230 the chain carries Phosphotyrosine. A phosphotyrosine; by autocatalysis mark is found at tyrosine 1234 and tyrosine 1235. Threonine 1289 carries the post-translational modification Phosphothreonine. The segment at 1320–1359 (WHPRAELRPSFSELVSRISAIFSTFIGEHYVHVNATYVNV) is interaction with MUC20. A phosphotyrosine; by autocatalysis mark is found at tyrosine 1349 and tyrosine 1356. Position 1365 is a phosphotyrosine (tyrosine 1365).

Belongs to the protein kinase superfamily. Tyr protein kinase family. Heterodimer made of an alpha chain (50 kDa) and a beta chain (145 kDa) which are disulfide linked. Binds PLXNB1. Interacts when phosphorylated with downstream effectors including STAT3, PIK3R1, SRC, PCLG1, GRB2 and GAB1. Interacts with SPSB1, SPSB2 and SPSB4. Interacts with INPP5D/SHIP1. When phosphorylated at Tyr-1356, interacts with INPPL1/SHIP2. Interacts with RANBP9 and RANBP10, as well as SPSB1, SPSB2, SPSB3 and SPSB4. SPSB1 binding occurs in the presence and in the absence of HGF, however HGF treatment has a positive effect on this interaction. Interacts with MUC20; prevents interaction with GRB2 and suppresses hepatocyte growth factor-induced cell proliferation. Interacts with GRB10. Interacts with PTPN1 and PTPN2. Interacts with HSP90AA1 and HSP90AB1; the interaction suppresses MET kinase activity. Interacts with tensin TNS3. Interacts (when phosphorylated) with tensin TNS4 (via SH2 domain); the interaction increases MET protein stability by inhibiting MET endocytosis and subsequent lysosomal degradation. In terms of processing, autophosphorylated in response to ligand binding on Tyr-1234 and Tyr-1235 in the kinase domain leading to further phosphorylation of Tyr-1349 and Tyr-1356 in the C-terminal multifunctional docking site. Dephosphorylated by PTPRJ at Tyr-1349 and Tyr-1365. Dephosphorylated by PTPN1 and PTPN2. Post-translationally, ubiquitinated. Ubiquitination by CBL regulates the receptor stability and activity through proteasomal degradation. O-mannosylation of IPT/TIG domains by TMEM260 is required for protein maturation. O-mannosylated residues are composed of single mannose glycans that are not elongated or modified.

It is found in the membrane. It carries out the reaction L-tyrosyl-[protein] + ATP = O-phospho-L-tyrosyl-[protein] + ADP + H(+). In its inactive state, the C-terminal tail interacts with the catalytic domain and inhibits the kinase activity. Upon ligand binding, the C-terminal tail is displaced and becomes phosphorylated, thus increasing the kinase activity. Receptor tyrosine kinase that transduces signals from the extracellular matrix into the cytoplasm by binding to hepatocyte growth factor/HGF ligand. Regulates many physiological processes including proliferation, scattering, morphogenesis and survival. Ligand binding at the cell surface induces autophosphorylation of MET on its intracellular domain that provides docking sites for downstream signaling molecules. Following activation by ligand, interacts with the PI3-kinase subunit PIK3R1, PLCG1, SRC, GRB2, STAT3 or the adapter GAB1. Recruitment of these downstream effectors by MET leads to the activation of several signaling cascades including the RAS-ERK, PI3 kinase-AKT, or PLCgamma-PKC. The RAS-ERK activation is associated with the morphogenetic effects while PI3K/AKT coordinates prosurvival effects. During embryonic development, MET signaling plays a role in gastrulation, development and migration of muscles and neuronal precursors, angiogenesis and kidney formation. In adults, participates in wound healing as well as organ regeneration and tissue remodeling. Also promotes differentiation and proliferation of hematopoietic cells. The sequence is that of Hepatocyte growth factor receptor (MET) from Sus scrofa (Pig).